A 71-amino-acid polypeptide reads, in one-letter code: Disintegrin applaggin (71 aa).

Residues E1–H71 enclose the Disintegrin domain. Disulfide bonds link C6-C21, C8-C16, C15-C38, C29-C35, C34-C58, and C47-C65. A Cell attachment site motif is present at residues R50–D52.

Belongs to the venom metalloproteinase (M12B) family. P-II subfamily. P-IIa sub-subfamily. As to quaternary structure, monomer (disintegrin). Expressed by the venom gland.

The protein localises to the secreted. Inhibits fibrinogen interaction with platelets. Acts by binding to alpha-IIb/beta-3 (ITGA2B/ITGB3) on the platelet surface and inhibits aggregation induced by ADP, thrombin, platelet-activating factor and collagen. This Agkistrodon piscivorus piscivorus (Eastern cottonmouth) protein is Disintegrin applaggin.